Reading from the N-terminus, the 552-residue chain is Arginine--tRNA ligase (552 aa).

The 'HIGH' region signature appears at 130 to 140 (ANPTGPLSIGH).

It belongs to the class-I aminoacyl-tRNA synthetase family. Monomer.

It is found in the cytoplasm. The catalysed reaction is tRNA(Arg) + L-arginine + ATP = L-arginyl-tRNA(Arg) + AMP + diphosphate. This is Arginine--tRNA ligase from Desulfotalea psychrophila (strain LSv54 / DSM 12343).